The chain runs to 279 residues: Orotidine 5'-phosphate decarboxylase (279 aa).

Residues Asp8, Lys30, 58–67, Thr117, Arg177, Gln186, Gly206, and Arg207 each bind substrate; that span reads DLKFHDIPNT. Lys60 serves as the catalytic Proton donor.

This sequence belongs to the OMP decarboxylase family. Type 1 subfamily. As to quaternary structure, homodimer.

The enzyme catalyses orotidine 5'-phosphate + H(+) = UMP + CO2. Its pathway is pyrimidine metabolism; UMP biosynthesis via de novo pathway; UMP from orotate: step 2/2. Catalyzes the decarboxylation of orotidine 5'-monophosphate (OMP) to uridine 5'-monophosphate (UMP). The polypeptide is Orotidine 5'-phosphate decarboxylase (Campylobacter jejuni subsp. jejuni serotype O:2 (strain ATCC 700819 / NCTC 11168)).